Reading from the N-terminus, the 319-residue chain is 4-diphosphocytidyl-2-C-methyl-D-erythritol kinase (319 aa).

The active site involves K21. 106–116 lines the ATP pocket; that stretch reads PIGAGLAGGSS. D148 is an active-site residue.

This sequence belongs to the GHMP kinase family. IspE subfamily.

The enzyme catalyses 4-CDP-2-C-methyl-D-erythritol + ATP = 4-CDP-2-C-methyl-D-erythritol 2-phosphate + ADP + H(+). The protein operates within isoprenoid biosynthesis; isopentenyl diphosphate biosynthesis via DXP pathway; isopentenyl diphosphate from 1-deoxy-D-xylulose 5-phosphate: step 3/6. In terms of biological role, catalyzes the phosphorylation of the position 2 hydroxy group of 4-diphosphocytidyl-2C-methyl-D-erythritol. The polypeptide is 4-diphosphocytidyl-2-C-methyl-D-erythritol kinase (Prochlorococcus marinus (strain SARG / CCMP1375 / SS120)).